A 144-amino-acid polypeptide reads, in one-letter code: RxLR effector protein PITG_03192 (144 aa).

The first 24 residues, 1-24 (MRVGFVFALLVVSVIVCFNGLTSA), serve as a signal peptide directing secretion. The RxLR-dEER motif lies at 49 to 58 (RNLRASGEER). An N-linked (GlcNAc...) asparagine glycan is attached at Asn-115. A helical transmembrane segment spans residues 122-142 (FFILATLVMFPIGVWAVVTNY).

The protein belongs to the RxLR effector family. Interacts with the C-terminal portions the ER-associated potato NAC transcription factors NTP1 and NTP2.

It localises to the secreted. It is found in the host endoplasmic reticulum membrane. In terms of biological role, effector that is required for full virulence. Targets host NTP1 and NTP2 transcription factors and prevents their pathogen-associated molecular pattern (PAMP)-triggered re-localization from the endoplasmic reticulum into the nucleus, where they contribute to prevent disease progression by P.infestans. In Phytophthora infestans (strain T30-4) (Potato late blight agent), this protein is RxLR effector protein PITG_03192.